The chain runs to 341 residues: Flap endonuclease 1 (341 aa).

Positions 1 to 98 (MGVQIGELIP…RELEKRREAR (98 aa)) are N-domain. Residues aspartate 27, aspartate 80, glutamate 152, glutamate 154, aspartate 173, aspartate 175, and aspartate 236 each contribute to the Mg(2+) site. The I-domain stretch occupies residues 116 to 258 (EAKKYAMRAT…KALTIVKRTK (143 aa)). Residues 330 to 338 (KQSTLESWF) are interaction with PCNA.

It belongs to the XPG/RAD2 endonuclease family. FEN1 subfamily. As to quaternary structure, interacts with PCNA. PCNA stimulates the nuclease activity without altering cleavage specificity. The cofactor is Mg(2+).

Structure-specific nuclease with 5'-flap endonuclease and 5'-3' exonuclease activities involved in DNA replication and repair. During DNA replication, cleaves the 5'-overhanging flap structure that is generated by displacement synthesis when DNA polymerase encounters the 5'-end of a downstream Okazaki fragment. Binds the unpaired 3'-DNA end and kinks the DNA to facilitate 5' cleavage specificity. Cleaves one nucleotide into the double-stranded DNA from the junction in flap DNA, leaving a nick for ligation. Also involved in the base excision repair (BER) pathway. Acts as a genome stabilization factor that prevents flaps from equilibrating into structures that lead to duplications and deletions. Also possesses 5'-3' exonuclease activity on nicked or gapped double-stranded DNA. This Thermococcus onnurineus (strain NA1) protein is Flap endonuclease 1.